The sequence spans 256 residues: Carboxysome shell protein CsoS1D (256 aa).

A disordered region spans residues 1-24 (MEPTSSLNRGDRKKGSSLVTGSEV). 2 BMC circularly permuted domains span residues 55 to 157 (ELRT…RTKP) and 158 to 256 (STSW…ISNY). A Gates the pore motif is present at residues 120 to 121 (ER).

It belongs to the EutL/PduB family. Homotrimer. Forms a dimer of stacked trimers, the same faces interact. A CsoS1-CsoS1D-CsoS2 complex can be isolated following expression in E.coli.

The protein resides in the carboxysome. In terms of biological role, part of the carboxysome shell, a polyhedral inclusion where RuBisCO (ribulose bisphosphate carboxylase, cbbL-cbbS) is sequestered. It may control transport of RuBisCO reactants in and out of the carboxysome. There are estimated to be 6 CsoS1D hexamers per carboxysome. The protein is Carboxysome shell protein CsoS1D of Prochlorococcus marinus subsp. pastoris (strain CCMP1986 / NIES-2087 / MED4).